The chain runs to 215 residues: Putative BTB/POZ domain-containing protein At2g05330 (215 aa).

Positions 17 to 87 (SWQKIGKLTY…LYSDGSMLSS (71 aa)) constitute a BTB domain.

It participates in protein modification; protein ubiquitination. Its function is as follows. May act as a substrate-specific adapter of an E3 ubiquitin-protein ligase complex (CUL3-RBX1-BTB) which mediates the ubiquitination and subsequent proteasomal degradation of target proteins. The protein is Putative BTB/POZ domain-containing protein At2g05330 of Arabidopsis thaliana (Mouse-ear cress).